Consider the following 39-residue polypeptide: Cytochrome b559 subunit beta (39 aa).

Residues 14–30 (WLAVHGLAVPTVFFLGS) form a helical membrane-spanning segment. H18 is a heme binding site.

The protein belongs to the PsbE/PsbF family. In terms of assembly, heterodimer of an alpha subunit and a beta subunit. PSII is composed of 1 copy each of membrane proteins PsbA, PsbB, PsbC, PsbD, PsbE, PsbF, PsbH, PsbI, PsbJ, PsbK, PsbL, PsbM, PsbT, PsbX, PsbY, PsbZ, Psb30/Ycf12, at least 3 peripheral proteins of the oxygen-evolving complex and a large number of cofactors. It forms dimeric complexes. Requires heme b as cofactor.

Its subcellular location is the plastid. It is found in the chloroplast thylakoid membrane. In terms of biological role, this b-type cytochrome is tightly associated with the reaction center of photosystem II (PSII). PSII is a light-driven water:plastoquinone oxidoreductase that uses light energy to abstract electrons from H(2)O, generating O(2) and a proton gradient subsequently used for ATP formation. It consists of a core antenna complex that captures photons, and an electron transfer chain that converts photonic excitation into a charge separation. This chain is Cytochrome b559 subunit beta, found in Pinus koraiensis (Korean pine).